An 844-amino-acid chain; its full sequence is Saxiphilin (844 aa).

The N-terminal stretch at 1-19 (MAPTFQTALFFTIISLSFA) is a signal peptide. Positions 26 to 106 (VRWCAISDLE…IAEPYSSNRD (81 aa)) constitute a Transferrin-like 1; first part domain. Cystine bridges form between Cys-29–Cys-64, Cys-39–Cys-55, Cys-110–Cys-130, Cys-141–Cys-148, Cys-150–Cys-172, Cys-180–Cys-202, Cys-222–Cys-244, Cys-277–Cys-360, Cys-322–Cys-335, Cys-332–Cys-343, Cys-388–Cys-402, Cys-495–Cys-527, Cys-505–Cys-518, Cys-552–Cys-839, Cys-570–Cys-799, Cys-607–Cys-685, Cys-641–Cys-655, Cys-652–Cys-668, and Cys-725–Cys-739. Thyroglobulin type-1 domains are found at residues 107 to 172 (LQKC…RATC) and 177 to 244 (LPKC…PATC). The absent in transferrins stretch occupies residues 109–249 (KCLKERQQAL…IPATCQKHDL (141 aa)). The 238-residue stretch at 245–482 (QKHDLVTTCH…LFHAMKALTG (238 aa)) folds into the Transferrin-like 1; second part domain. Residues 492 to 828 (VRWCTINKLE…YYTTVYGASR (337 aa)) enclose the Transferrin-like 2 domain.

It belongs to the transferrin family. Monomer. Plasma. Highest levels of transcripts found in the liver, the lung, the pancreas and the brain.

It is found in the secreted. In terms of biological role, binds specifically to the neurotoxin saxitoxin. Its physiological role may be to transport or sequester an endogenous organic molecule other than Fe(3+). It may participate in a detoxification mechanism for neutralizing a microbial toxin. The sequence is that of Saxiphilin from Aquarana catesbeiana (American bullfrog).